A 353-amino-acid chain; its full sequence is MMKKALLIDDECWLRVQARDASADGRFVFAVRTTGVFCRPSCRSKRALRKNVRFFANAQQALDAGFRPCKRCQPDNARAQQRRLDKIACACRLLEQETPVTLAFLAQAVAMSPFHLHRLFKASTGMTPKGWQQAWRARRLREALAKGEPITAAIYRAGFPDSSSYYRHADQTLGMTAKQFRKGGDNVSVRYALTDWVYGRCLVAESERGICAILPGDSDDALLAELHTLFPSARHEPADALFQQRVRQVVAAINTRDVLLSLPLDIQGTAFQQQVWQALCAIPCGETVSYQQLAATIGKPTAVRAVASACGANKLAMVIPCHRVVRRDGALSGYRWGVRRKAQLLKREAQKEE.

Residue threonine 34 participates in DNA binding. Cysteine 38 (nucleophile; methyl group acceptor from phosphotriester) is an active-site residue. Residues cysteine 38 and cysteine 42 each coordinate Zn(2+). The DNA site is built by arginine 43 and arginine 67. Residues cysteine 69 and cysteine 72 each coordinate Zn(2+). The HTH araC/xylS-type domain occupies 94-183; that stretch reads LEQETPVTLA…GMTAKQFRKG (90 aa). 2 consecutive DNA-binding regions (H-T-H motif) follow at residues 103-124 and 150-173; these read AFLA…KAST and ITAA…DQTL. Cysteine 321 functions as the Nucleophile; methyl group acceptor in the catalytic mechanism.

It in the C-terminal section; belongs to the MGMT family. It depends on Zn(2+) as a cofactor.

It catalyses the reaction a 6-O-methyl-2'-deoxyguanosine in DNA + L-cysteinyl-[protein] = S-methyl-L-cysteinyl-[protein] + a 2'-deoxyguanosine in DNA. The catalysed reaction is a 4-O-methyl-thymidine in DNA + L-cysteinyl-[protein] = a thymidine in DNA + S-methyl-L-cysteinyl-[protein]. In terms of biological role, involved in the cellular defense against the biological effects of O6-methylguanine (O6-MeG) and O4-methylthymine (O4-MeT) in DNA. Repairs the methylated nucleobase in DNA by stoichiometrically transferring the methyl group to a cysteine residue in the enzyme. This is a suicide reaction: the enzyme is irreversibly inactivated. The methylated ADA protein acts as a positive regulator of its own synthesis, as well as that of other proteins. The transcription-activating function of the ADA protein resides in its N-terminus. It activates the transcription of alkA, alkB and aidB. In Salmonella typhimurium (strain LT2 / SGSC1412 / ATCC 700720), this protein is Regulatory protein ada (ada).